Consider the following 61-residue polypeptide: Probable tautomerase SERP0934 (61 aa).

Proline 2 (proton acceptor; via imino nitrogen) is an active-site residue.

Belongs to the 4-oxalocrotonate tautomerase family.

This is Probable tautomerase SERP0934 from Staphylococcus epidermidis (strain ATCC 35984 / DSM 28319 / BCRC 17069 / CCUG 31568 / BM 3577 / RP62A).